The following is a 642-amino-acid chain: Myrosinase-binding protein 2 (642 aa).

Jacalin-type lectin domains lie at 2–151 (SEKV…HFFA), 156–291 (LKHF…HFAP), 334–477 (PNKV…YFAP), and 490–633 (SKKL…HAVP). Positions 296-334 (TPAPAPAPAPAPAPAPSPAPASAPVPAPAPTPAPAPAPP) are enriched in pro residues. Disordered stretches follow at residues 296–338 (TPAP…NKVE) and 479–499 (TNSTTPSTPSTSKKLQARGGN). Positions 479-490 (TNSTTPSTPSTS) are enriched in low complexity.

This sequence belongs to the jacalin lectin family. Expressed in flowers. Detected mainly in ovules and styles of immature flowers, but also in pistils, styles, stamens, petals and embryos. Not detected in leaves.

The chain is Myrosinase-binding protein 2 (F-ATMBP) from Arabidopsis thaliana (Mouse-ear cress).